Here is a 215-residue protein sequence, read N- to C-terminus: MKILVTGFDPFGGEAINPALEAIKKLPATIHGAEIKYIEVPTVFQKSADVLQQHIESFQPDAVLCIGQAGGRTGLTPERVAINQDDARIPDNEGNQPIDTPIRADGKAAYFSTLPIKAMVAAIHQAGLPASVSNTAGTFVCNHLMYQALYLVDKYCPNAKAGFMHIPFMMEQVVDKPNTAAMNLDDITRGIEAAIFAIVDFKDRSDLKRVGGATH.

Active-site residues include Glu78, Cys141, and His165.

The protein belongs to the peptidase C15 family. Homotetramer.

It localises to the cytoplasm. The catalysed reaction is Release of an N-terminal pyroglutamyl group from a polypeptide, the second amino acid generally not being Pro.. Its function is as follows. Removes 5-oxoproline from various penultimate amino acid residues except L-proline. This Streptococcus pyogenes serotype M12 (strain MGAS2096) protein is Pyrrolidone-carboxylate peptidase.